Reading from the N-terminus, the 288-residue chain is ATP synthase gamma chain (288 aa).

It belongs to the ATPase gamma chain family. As to quaternary structure, F-type ATPases have 2 components, CF(1) - the catalytic core - and CF(0) - the membrane proton channel. CF(1) has five subunits: alpha(3), beta(3), gamma(1), delta(1), epsilon(1). CF(0) has three main subunits: a, b and c.

The protein resides in the cell inner membrane. Functionally, produces ATP from ADP in the presence of a proton gradient across the membrane. The gamma chain is believed to be important in regulating ATPase activity and the flow of protons through the CF(0) complex. This is ATP synthase gamma chain from Aeromonas hydrophila subsp. hydrophila (strain ATCC 7966 / DSM 30187 / BCRC 13018 / CCUG 14551 / JCM 1027 / KCTC 2358 / NCIMB 9240 / NCTC 8049).